Here is a 436-residue protein sequence, read N- to C-terminus: UPF0597 protein YhaM (436 aa).

Belongs to the UPF0597 family.

In Escherichia coli O139:H28 (strain E24377A / ETEC), this protein is UPF0597 protein YhaM.